The sequence spans 193 residues: Ion-translocating oxidoreductase complex subunit A (193 aa).

6 helical membrane-spanning segments follow: residues Leu5–Leu25, Phe47–Leu67, Leu72–Val92, Leu102–Leu122, Ala134–Ile154, and Ala171–Val191.

The protein belongs to the NqrDE/RnfAE family. The complex is composed of six subunits: RsxA, RsxB, RsxC, RsxD, RsxE and RsxG.

The protein resides in the cell inner membrane. Functionally, part of a membrane-bound complex that couples electron transfer with translocation of ions across the membrane. Required to maintain the reduced state of SoxR. The polypeptide is Ion-translocating oxidoreductase complex subunit A (Escherichia coli O45:K1 (strain S88 / ExPEC)).